A 403-amino-acid chain; its full sequence is Sorting nexin-32 (403 aa).

Residues 20 to 168 (LQGDSSLQVE…VFLEYGQDLS (149 aa)) form the PX domain. A coiled-coil region spans residues 258 to 335 (NQLRTSFLKL…KARTRNREVR (78 aa)).

It belongs to the sorting nexin family.

May be involved in several stages of intracellular trafficking. This is Sorting nexin-32 (SNX32) from Homo sapiens (Human).